The primary structure comprises 512 residues: Anaerobic nitric oxide reductase transcription regulator NorR (512 aa).

Residues 190–419 (MIGESLAMQE…LEHVISRAAV (230 aa)) enclose the Sigma-54 factor interaction domain. ATP is bound by residues 218 to 225 (GETGVGKE) and 281 to 290 (ADNGTLFLDE). Positions 487–506 (WAATARALQLDTGNLHRLAK) form a DNA-binding region, H-T-H motif.

It functions in the pathway nitrogen metabolism; nitric oxide reduction. Required for the expression of anaerobic nitric oxide (NO) reductase, acts as a transcriptional activator for at least the norVW operon. Activation also requires sigma-54. The polypeptide is Anaerobic nitric oxide reductase transcription regulator NorR (Aliivibrio fischeri (strain ATCC 700601 / ES114) (Vibrio fischeri)).